Here is a 585-residue protein sequence, read N- to C-terminus: Pyruvate kinase (585 aa).

Substrate is bound at residue Arg32. K(+) is bound by residues Asn34, Ser36, Asp66, and Thr67. 34–37 contacts ATP; sequence NFSH. ATP is bound by residues Arg73 and Lys156. Residue Glu221 participates in Mg(2+) binding. Residues Gly244, Asp245, and Thr277 each coordinate substrate. Residue Asp245 coordinates Mg(2+).

The protein belongs to the pyruvate kinase family. This sequence in the C-terminal section; belongs to the PEP-utilizing enzyme family. The cofactor is Mg(2+). Requires K(+) as cofactor.

The catalysed reaction is pyruvate + ATP = phosphoenolpyruvate + ADP + H(+). It functions in the pathway carbohydrate degradation; glycolysis; pyruvate from D-glyceraldehyde 3-phosphate: step 5/5. The polypeptide is Pyruvate kinase (pyk) (Staphylococcus aureus (strain bovine RF122 / ET3-1)).